A 79-amino-acid polypeptide reads, in one-letter code: Small ribosomal subunit protein bS16 (79 aa).

This sequence belongs to the bacterial ribosomal protein bS16 family.

The chain is Small ribosomal subunit protein bS16 from Nitratidesulfovibrio vulgaris (strain ATCC 29579 / DSM 644 / CCUG 34227 / NCIMB 8303 / VKM B-1760 / Hildenborough) (Desulfovibrio vulgaris).